Here is a 291-residue protein sequence, read N- to C-terminus: N-acetylmannosamine kinase (291 aa).

Residues 5–12 and 132–139 each bind ATP; these read AIDIGGTK and GVGGGVVS. 4 residues coordinate Zn(2+): His-156, Cys-166, Cys-168, and Cys-173.

This sequence belongs to the ROK (NagC/XylR) family. NanK subfamily. Homodimer.

It catalyses the reaction an N-acyl-D-mannosamine + ATP = an N-acyl-D-mannosamine 6-phosphate + ADP + H(+). It participates in amino-sugar metabolism; N-acetylneuraminate degradation; D-fructose 6-phosphate from N-acetylneuraminate: step 2/5. In terms of biological role, catalyzes the phosphorylation of N-acetylmannosamine (ManNAc) to ManNAc-6-P. The protein is N-acetylmannosamine kinase of Escherichia coli (strain SMS-3-5 / SECEC).